A 606-amino-acid chain; its full sequence is Glutamine--fructose-6-phosphate aminotransferase [isomerizing] (606 aa).

The Nucleophile; for GATase activity role is filled by Cys-2. Positions 2–218 (CGIFGYLGQR…SGELAVLRIG (217 aa)) constitute a Glutamine amidotransferase type-2 domain. SIS domains are found at residues 278–424 (FAES…QRQE) and 455–596 (WRCR…VDRP). Lys-601 acts as the For Fru-6P isomerization activity in catalysis.

In terms of assembly, homodimer.

The protein localises to the cytoplasm. It carries out the reaction D-fructose 6-phosphate + L-glutamine = D-glucosamine 6-phosphate + L-glutamate. In terms of biological role, catalyzes the first step in hexosamine metabolism, converting fructose-6P into glucosamine-6P using glutamine as a nitrogen source. This is Glutamine--fructose-6-phosphate aminotransferase [isomerizing] from Chlamydia muridarum (strain MoPn / Nigg).